Here is a 284-residue protein sequence, read N- to C-terminus: Pantothenate synthetase (284 aa).

30–37 (MGNLHNAH) provides a ligand contact to ATP. Catalysis depends on histidine 37, which acts as the Proton donor. Glutamine 61 contacts (R)-pantoate. Glutamine 61 serves as a coordination point for beta-alanine. 149–152 (GIKD) contacts ATP. A (R)-pantoate-binding site is contributed by glutamine 155. Residues valine 178 and 186 to 189 (MSSR) each bind ATP.

The protein belongs to the pantothenate synthetase family. As to quaternary structure, homodimer.

The protein resides in the cytoplasm. The catalysed reaction is (R)-pantoate + beta-alanine + ATP = (R)-pantothenate + AMP + diphosphate + H(+). It functions in the pathway cofactor biosynthesis; (R)-pantothenate biosynthesis; (R)-pantothenate from (R)-pantoate and beta-alanine: step 1/1. In terms of biological role, catalyzes the condensation of pantoate with beta-alanine in an ATP-dependent reaction via a pantoyl-adenylate intermediate. This is Pantothenate synthetase from Saccharophagus degradans (strain 2-40 / ATCC 43961 / DSM 17024).